An 85-amino-acid polypeptide reads, in one-letter code: Toxin BmKAEP (85 aa).

Positions 1-21 (MKLFLLLVISASMLIDGLVNA) are cleaved as a signal peptide. The LCN-type CS-alpha/beta domain occupies 22–82 (DGYIRGSNGC…TWKSESNTCG (61 aa)). Cystine bridges form between Cys-31–Cys-81, Cys-35–Cys-56, Cys-42–Cys-63, and Cys-46–Cys-65. At Gly-82 the chain carries Glycine amide.

As to expression, expressed by the venom gland.

The protein resides in the secreted. Functionally, shows anti-epileptic activity. Shares high homology with depressant insect toxins, but shows very weak toxicity against mammals and insects and no obvious symptoms on insect larvae. May target voltage-gated sodium channel (Nav). The sequence is that of Toxin BmKAEP from Olivierus martensii (Manchurian scorpion).